The chain runs to 396 residues: Cell adhesion molecule 3 (396 aa).

A signal peptide spans methionine 1–alanine 22. An Ig-like V-type domain is found at asparagine 23–valine 124. Topologically, residues asparagine 23–histidine 328 are extracellular. Intrachain disulfides connect cysteine 48–cysteine 108, cysteine 150–cysteine 207, and cysteine 252–cysteine 297. Ig-like C2-type domains lie at proline 128–glutamate 226 and proline 231–asparagine 313. Asparagine 288 is a glycosylation site (N-linked (GlcNAc...) asparagine). Residues alanine 329 to leucine 349 form a helical membrane-spanning segment. At glycine 350–isoleucine 396 the chain is on the cytoplasmic side. Residues alanine 365 to isoleucine 396 form a disordered region. At serine 386 the chain carries Phosphoserine.

The protein belongs to the nectin family. Homodimer. Can form trans-heterodimers with NECTIN3. Interacts with EPB41L1, DLG3, PALS2 and CASK. Mainly expressed in brain, in neuronal cell bodies of cerebellum, cortex, hippocampus, hypothalamus and spinal cord. In spinal cord predominantly expressed in motor neurons. Expressed in axons, presynaptic nerve terminals, glia cell processes.

The protein resides in the cell membrane. It is found in the cell junction. Its function is as follows. Involved in cell-cell adhesion. Has both calcium-independent homophilic cell-cell adhesion activity and calcium-independent heterophilic cell-cell adhesion activity with IGSF4, NECTIN1 and NECTIN3. Interaction with EPB41L1 may regulate structure or function of cell-cell junctions. In Mus musculus (Mouse), this protein is Cell adhesion molecule 3 (Cadm3).